The sequence spans 121 residues: N-alpha-acetyltransferase 38, NatC auxiliary subunit (121 aa).

The 74-residue stretch at 40–113 (PGRRKLQKWL…IVSLSIDEPD (74 aa)) folds into the Sm domain.

It belongs to the snRNP Sm proteins family. Component of the N-terminal acetyltransferase C (NatC) complex, which is composed of Naa35, Sbat/Naa38 and Naa30A. Interacts with Smn and Hez; along with Hez and Vlet, may form an accessory subcomplex involved in SMN complex function.

It localises to the cytoplasm. The protein resides in the nucleus. In terms of biological role, auxiliary component of the N-terminal acetyltransferase C (NatC) complex which catalyzes acetylation of N-terminal methionine residues. May have an accessory function in the survival motor neuron (SMN) complex. This Drosophila melanogaster (Fruit fly) protein is N-alpha-acetyltransferase 38, NatC auxiliary subunit.